A 441-amino-acid chain; its full sequence is Serine hydroxymethyltransferase (441 aa).

Residue 124 to 126 (GHI) coordinates (6S)-5,6,7,8-tetrahydrofolate. N6-(pyridoxal phosphate)lysine is present on Lys-239.

This sequence belongs to the SHMT family. In terms of assembly, homodimer. The cofactor is pyridoxal 5'-phosphate.

Its subcellular location is the cytoplasm. The protein operates within amino-acid biosynthesis; glycine biosynthesis; glycine from L-serine: step 1/1. Functionally, catalyzes the reversible interconversion of serine and glycine with a modified folate serving as the one-carbon carrier. Also exhibits a pteridine-independent aldolase activity toward beta-hydroxyamino acids, producing glycine and aldehydes, via a retro-aldol mechanism. The polypeptide is Serine hydroxymethyltransferase (Cenarchaeum symbiosum (strain A)).